A 60-amino-acid chain; its full sequence is Large ribosomal subunit protein uL30 (60 aa).

The protein belongs to the universal ribosomal protein uL30 family. As to quaternary structure, part of the 50S ribosomal subunit.

In Leptothrix cholodnii (strain ATCC 51168 / LMG 8142 / SP-6) (Leptothrix discophora (strain SP-6)), this protein is Large ribosomal subunit protein uL30.